A 377-amino-acid polypeptide reads, in one-letter code: Nitric oxide reductase FlRd-NAD(+) reductase (377 aa).

Belongs to the FAD-dependent oxidoreductase family. FAD is required as a cofactor.

It localises to the cytoplasm. The catalysed reaction is 2 reduced [nitric oxide reductase rubredoxin domain] + NAD(+) + H(+) = 2 oxidized [nitric oxide reductase rubredoxin domain] + NADH. It functions in the pathway nitrogen metabolism; nitric oxide reduction. In terms of biological role, one of at least two accessory proteins for anaerobic nitric oxide (NO) reductase. Reduces the rubredoxin moiety of NO reductase. The sequence is that of Nitric oxide reductase FlRd-NAD(+) reductase from Escherichia coli O7:K1 (strain IAI39 / ExPEC).